The primary structure comprises 142 residues: Non-specific lipid transfer protein GPI-anchored 34 (142 aa).

The first 22 residues, 1-22 (MAVAVTAVLFLAVVIAPQWTET), serve as a signal peptide directing secretion. The tract at residues 21–43 (ETKKPPRPSDTSDTSGTSGRDRR) is disordered. The segment covering 29–38 (SDTSDTSGTS) has biased composition (low complexity). Disulfide bonds link Cys-46-Cys-85, Cys-57-Cys-69, Cys-70-Cys-106, and Cys-83-Cys-114. A lipid anchor (GPI-anchor amidated asparagine) is attached at Asn-120. A propeptide spans 121-142 (GGATKKIVASMGLFGVVASLFF) (removed in mature form).

It belongs to the plant LTP family.

It is found in the cell membrane. Its function is as follows. Probable lipid transfer protein. This Arabidopsis thaliana (Mouse-ear cress) protein is Non-specific lipid transfer protein GPI-anchored 34.